The primary structure comprises 831 residues: Periplasmic nitrate reductase (831 aa).

The tat-type signal signal peptide spans 1–29 (MTLTRRDLIKAQAAATAAAAAGLPVSALA). The region spanning 41–97 (IRWSKAPCRFCGTGCGVMVGTRDGQVVATHGDTQAEVNRGLNCVKGYFLSKIMYGED) is the 4Fe-4S Mo/W bis-MGD-type domain. [4Fe-4S] cluster-binding residues include Cys-48, Cys-51, Cys-55, and Cys-83. Residues Lys-85, Gln-152, Asn-177, Cys-181, 214 to 221 (WGSNMAEM), 245 to 249 (STFTH), 264 to 266 (GTD), Met-375, Gln-379, Asn-485, 511 to 512 (SD), Lys-534, Asp-561, and 721 to 730 (TGRVLEHWHS) contribute to the Mo-bis(molybdopterin guanine dinucleotide) site. Residue Trp-797 participates in substrate binding. 2 residues coordinate Mo-bis(molybdopterin guanine dinucleotide): Asn-805 and Lys-822.

The protein belongs to the prokaryotic molybdopterin-containing oxidoreductase family. NasA/NapA/NarB subfamily. As to quaternary structure, component of the periplasmic nitrate reductase NapAB complex composed of NapA and NapB. Requires [4Fe-4S] cluster as cofactor. The cofactor is Mo-bis(molybdopterin guanine dinucleotide). Predicted to be exported by the Tat system. The position of the signal peptide cleavage has not been experimentally proven.

Its subcellular location is the periplasm. The enzyme catalyses 2 Fe(II)-[cytochrome] + nitrate + 2 H(+) = 2 Fe(III)-[cytochrome] + nitrite + H2O. In terms of biological role, catalytic subunit of the periplasmic nitrate reductase complex NapAB. Receives electrons from NapB and catalyzes the reduction of nitrate to nitrite. This Cereibacter sphaeroides (strain ATCC 17023 / DSM 158 / JCM 6121 / CCUG 31486 / LMG 2827 / NBRC 12203 / NCIMB 8253 / ATH 2.4.1.) (Rhodobacter sphaeroides) protein is Periplasmic nitrate reductase.